Reading from the N-terminus, the 307-residue chain is Transcription factor MYB78 (307 aa).

2 HTH myb-type domains span residues 23-79 (EMDV…RPDV) and 80-130 (RRGN…QKHA). DNA-binding regions (H-T-H motif) lie at residues 51–75 (WNSL…LNYL) and 103–126 (WSKI…RTRV).

The protein resides in the nucleus. The sequence is that of Transcription factor MYB78 from Arabidopsis thaliana (Mouse-ear cress).